The primary structure comprises 255 residues: Tablysin 15 (255 aa).

An N-terminal signal peptide occupies residues 1–23 (MTSIPVSSFLLAALVLQYATSDA). 3 cysteine pairs are disulfide-bonded: cysteine 27/cysteine 40, cysteine 31/cysteine 117, and cysteine 49/cysteine 110. The Cell attachment site signature appears at 32–34 (RGD). Residues 67–211 (LSKINDVRDH…KARALLTCNF (145 aa)) enclose the SCP domain. Positions 82, 153, and 156 each coordinate leukotriene E4. 2 disulfides stabilise this stretch: cysteine 192-cysteine 209 and cysteine 232-cysteine 243.

It belongs to the CRISP family. In terms of tissue distribution, expressed in salivary glands.

Its subcellular location is the secreted. Its function is as follows. Anti-inflammatory scavenger of eicosanoids and antithrombotic protein that inhibits platelets aggregation induced by collagen, ADP and convulxin (GPVI agonist). Exhibits high affinity binding for glycoprotein IIb-IIIa receptor (ITGA2B/ITGB3) and endothelial cell alphaVbeta3 (ITGAV/ITGB3) integrins, but not for alpha-5/beta-1 or alpha-2/beta-1. Accordingly, it blocks endothelial cell adhesion to vitronectin (IC(50)~1 nM) and marginally to fibronectin (IC(50)~1 uM), but not to collagen. It also inhibits fibroblast growth factor (FGF)-induced endothelial cell proliferation, and attenuates tube formation in vitro. In addition, it dose-dependently attenuates thrombus formation to collagen under flow. Also binds proinflammatory cysteinyl leukotrienes (leukotrienes C4 (LTC4), D4 (LTD4) and E4 (LTE4)) with submicromolar affinities. The sequence is that of Tablysin 15 from Tabanus yao (Horsefly).